The following is a 192-amino-acid chain: MVKIGVLGLQGAVREHVRSIEACGAEAVVIKKVEQLTQIDGLIIPGGESTTMRRLMDKYGFIEPLKQFAREGKPMFGTCAGLIILAKKIVGYDEPHLGLMDITVERNSFGRQRESFEASLAIKGVADDFIGVFIRAPHIVSVGADVDVLATYEDRIVAARQGQFLGCSFHPELTDDHRMTQYFINMVKETKE.

47-49 is an L-glutamine binding site; the sequence is GES. The Nucleophile role is filled by cysteine 79. Residues arginine 106 and 134–135 contribute to the L-glutamine site; that span reads IR. Residues histidine 170 and glutamate 172 each act as charge relay system in the active site.

Belongs to the glutaminase PdxT/SNO family. In terms of assembly, in the presence of PdxS, forms a dodecamer of heterodimers. Only shows activity in the heterodimer.

The catalysed reaction is aldehydo-D-ribose 5-phosphate + D-glyceraldehyde 3-phosphate + L-glutamine = pyridoxal 5'-phosphate + L-glutamate + phosphate + 3 H2O + H(+). The enzyme catalyses L-glutamine + H2O = L-glutamate + NH4(+). It participates in cofactor biosynthesis; pyridoxal 5'-phosphate biosynthesis. In terms of biological role, catalyzes the hydrolysis of glutamine to glutamate and ammonia as part of the biosynthesis of pyridoxal 5'-phosphate. The resulting ammonia molecule is channeled to the active site of PdxS. This is Pyridoxal 5'-phosphate synthase subunit PdxT from Anoxybacillus flavithermus (strain DSM 21510 / WK1).